Here is a 545-residue protein sequence, read N- to C-terminus: Light-independent protochlorophyllide reductase subunit N (545 aa).

The [4Fe-4S] cluster site is built by C102, C127, and C187.

The protein belongs to the BchN/ChlN family. As to quaternary structure, protochlorophyllide reductase is composed of three subunits; ChlL, ChlN and ChlB. Forms a heterotetramer of two ChlB and two ChlN subunits. The cofactor is [4Fe-4S] cluster.

Its subcellular location is the plastid. It localises to the chloroplast. The enzyme catalyses chlorophyllide a + oxidized 2[4Fe-4S]-[ferredoxin] + 2 ADP + 2 phosphate = protochlorophyllide a + reduced 2[4Fe-4S]-[ferredoxin] + 2 ATP + 2 H2O. It participates in porphyrin-containing compound metabolism; chlorophyll biosynthesis (light-independent). In terms of biological role, component of the dark-operative protochlorophyllide reductase (DPOR) that uses Mg-ATP and reduced ferredoxin to reduce ring D of protochlorophyllide (Pchlide) to form chlorophyllide a (Chlide). This reaction is light-independent. The NB-protein (ChlN-ChlB) is the catalytic component of the complex. The protein is Light-independent protochlorophyllide reductase subunit N of Chlamydomonas reinhardtii (Chlamydomonas smithii).